The primary structure comprises 54 residues: Ovomucoid (54 aa).

The Kazal-like domain maps to 4–54 (VDCSGYPTHACTLELKPLCGSDNQTYSNKCGFCNAVAQSNGTLTLSHFGKC). 3 disulfide bridges follow: cysteine 6–cysteine 36, cysteine 14–cysteine 33, and cysteine 22–cysteine 54. Asparagine 43 carries an N-linked (GlcNAc...) asparagine glycan.

It localises to the secreted. This chain is Ovomucoid, found in Leipoa ocellata (Malleefowl).